The primary structure comprises 1766 residues: Putative ATP-dependent RNA helicase R366 (1766 aa).

The disordered stretch occupies residues 209–239 (KSSSNQNSNQSNQESNESNQEPNESNQEINQ). A compositionally biased stretch (low complexity) spans 210–239 (SSSNQNSNQSNQESNESNQEPNESNQEINQ). The Helicase ATP-binding domain occupies 656–865 (YHHYSNNRVL…RYYRRINDNR (210 aa)). 669-676 (GATGVGKS) contributes to the ATP binding site. The short motif at 812–815 (DEAH) is the DEAH box element. The Helicase C-terminal domain maps to 947-1116 (DIHKSIKAIN…TMVKLIKSYP (170 aa)).

Belongs to the DEAD box helicase family. DEAH subfamily.

It carries out the reaction ATP + H2O = ADP + phosphate + H(+). The sequence is that of Putative ATP-dependent RNA helicase R366 from Acanthamoeba polyphaga mimivirus (APMV).